The following is a 971-amino-acid chain: Dynamin-like GTPase OPA1, mitochondrial (971 aa).

The N-terminal 89 residues, 1-89 (MLRVGRAVAC…GGWRYQQHRS (89 aa)), are a transit peptide targeting the mitochondrion. Residues 90 to 98 (FWMLRLASR) are Mitochondrial matrix-facing. A helical membrane pass occupies residues 99 to 115 (LLKLRYIVLGSAVGGGY). The Mitochondrial intermembrane segment spans residues 116–781 (TAKKTYEEWK…SVINDMVGPD (666 aa)). The disordered stretch occupies residues 204-224 (EAPVTATPEASDKQFKKSSDK). The segment covering 213–224 (ASDKQFKKSSDK) has biased composition (basic and acidic residues). A coiled-coil region spans residues 219 to 265 (KKSSDKEKVDQLQEELLRTQMKYQRMLERLEKENKDLRKVVLQKDEK). Positions 297 to 572 (QDHLPRVVVV…FWKMVRESVE (276 aa)) constitute a Dynamin-type G domain. Positions 307 to 314 (GDQSAGKT) are G1 motif. GTP contacts are provided by Ser310, Gly312, Lys313, Thr314, Ser315, and Gly329. Residue Thr314 participates in Mg(2+) binding. Positions 333–336 (MMTR) are G2 motif. Residues Thr335 and Asp410 each contribute to the Mg(2+) site. Residues 410–413 (DLPG) are G3 motif. Residues 478-481 (TKVD) form a G4 motif region. GTP-binding residues include Lys479, Asp481, and Thr514. Positions 512–515 (VVTG) are G5 motif. Stalk region regions lie at residues 600-847 (DRNE…IKDT) and 885-939 (CNDV…VHLI). The tract at residues 747-867 (TDKPQWDAAI…QKALQHCNLC (121 aa)) is paddle region. An intramembrane segment occupies 782-792 (WKQRWMSWKNR). The Mitochondrial intermembrane portion of the chain corresponds to 793–971 (SPEQHTRNET…AFIEALHKEK (179 aa)). The cysteines at positions 867 and 885 are disulfide-linked. Residues 906–971 (RQQLTNTEVR…AFIEALHKEK (66 aa)) adopt a coiled-coil conformation.

Belongs to the TRAFAC class dynamin-like GTPase superfamily. Dynamin/Fzo/YdjA family. As to quaternary structure, oligomeric complex consisting of membrane-bound and soluble forms of OPA1. In terms of processing, cleaved by OMA1 or YME1L downstream of the transmembrane region in response to different signals to generate soluble forms. Cleaved by OMA1 at position S1 following stress conditions, generating the short soluble form (Dynamin-like GTPase OPA1, short form; S-OPA1). In terms of tissue distribution, strongly expressed in the brain, ovary and skeletal muscle. In the brain, expression of the mRNA was observed specifically in motor neurons, in nucleus oculomotorius, in nucleus valvulae lateralis, in the medulla oblongata and in the spinal cord.

It is found in the mitochondrion inner membrane. It localises to the mitochondrion intermembrane space. It carries out the reaction GTP + H2O = GDP + phosphate + H(+). Its function is as follows. Dynamin-related GTPase that is essential for normal mitochondrial morphology by mediating fusion of the mitochondrial inner membranes, regulating cristae morphology and maintaining respiratory chain function. Exists in two forms: the transmembrane, long form (Dynamin-like GTPase OPA1, long form; L-OPA1), which is tethered to the inner mitochondrial membrane, and the short soluble form (Dynamin-like GTPase OPA1, short form; S-OPA1), which results from proteolytic cleavage and localizes in the intermembrane space. Both forms (L-OPA1 and S-OPA1) cooperate to catalyze the fusion of the mitochondrial inner membrane. The equilibrium between L-OPA1 and S-OPA1 is essential: excess levels of S-OPA1, produced by cleavage by OMA1 following loss of mitochondrial membrane potential, lead to an impaired equilibrium between L-OPA1 and S-OPA1, inhibiting mitochondrial fusion. The balance between L-OPA1 and S-OPA1 also influences cristae shape and morphology. Its role in mitochondrial morphology is required for mitochondrial genome maintenance. In terms of biological role, constitutes the transmembrane long form (L-OPA1) that plays a central role in mitochondrial inner membrane fusion and cristae morphology. L-OPA1 and the soluble short form (S-OPA1) form higher-order helical assemblies that coordinate the fusion of mitochondrial inner membranes. Inner membrane-anchored L-OPA1 molecules initiate membrane remodeling by recruiting soluble S-OPA1 to rapidly polymerize into a flexible cylindrical scaffold encaging the mitochondrial inner membrane. Once at the membrane surface, the formation of S-OPA1 helices induce bilayer curvature. OPA1 dimerization through the paddle region, which inserts into cardiolipin-containing membrane, promotes GTP hydrolysis and the helical assembly of a flexible OPA1 lattice on the membrane, which drives membrane curvature and mitochondrial fusion. Plays a role in the maintenance and remodeling of mitochondrial cristae, some invaginations of the mitochondrial inner membrane that provide an increase in the surface area. Probably acts by forming helical filaments at the inside of inner membrane tubes with the shape and dimensions of crista junctions. Constitutes the soluble short form (S-OPA1) generated by cleavage by OMA1, which plays a central role in mitochondrial inner membrane fusion and cristae morphology. The transmembrane long form (L-OPA1) and the S-OPA1 form higher-order helical assemblies that coordinate the fusion of mitochondrial inner membranes. Inner membrane-anchored L-OPA1 molecules initiate membrane remodeling by recruiting soluble S-OPA1 to rapidly polymerize into a flexible cylindrical scaffold encaging the mitochondrial inner membrane. Once at the membrane surface, the formation of S-OPA1 helices induce bilayer curvature. OPA1 dimerization through the paddle region, which inserts into cardiolipin-containing membrane, promotes GTP hydrolysis and the helical assembly of a flexible OPA1 lattice on the membrane, which drives membrane curvature and mitochondrial fusion. Excess levels of S-OPA1 produced by cleavage by OMA1 following stress conditions that induce loss of mitochondrial membrane potential, lead to an impaired equilibrium between L-OPA1 and S-OPA1, thereby inhibiting mitochondrial fusion. Plays a role in the maintenance and remodeling of mitochondrial cristae, some invaginations of the mitochondrial inner membrane that provide an increase in the surface area. Probably acts by forming helical filaments at the inside of inner membrane tubes with the shape and dimensions of crista junctions. This Oncorhynchus masou (Cherry salmon) protein is Dynamin-like GTPase OPA1, mitochondrial (opa1).